The sequence spans 394 residues: Actin-related protein 2 (394 aa).

Met-1 carries the post-translational modification N-acetylmethionine. ATP contacts are provided by residues 160 to 162 (GDG) and 214 to 218 (RMIKE). An N6-acetyllysine modification is found at Lys-299. Residue 305 to 310 (GGSTMY) participates in ATP binding. Residue Lys-322 is modified to N6-acetyllysine.

The protein belongs to the actin family. ARP2 subfamily. Component of the Arp2/3 complex composed of ACTR2/ARP2, ACTR3/ARP3, ARPC1B/p41-ARC, ARPC2/p34-ARC, ARPC3/p21-ARC, ARPC4/p20-ARC and ARPC5/p16-ARC.

Its subcellular location is the cytoplasm. The protein localises to the cytoskeleton. The protein resides in the cell projection. It is found in the nucleus. Functionally, ATP-binding component of the Arp2/3 complex, a multiprotein complex that mediates actin polymerization upon stimulation by nucleation-promoting factor (NPF). The Arp2/3 complex mediates the formation of branched actin networks in the cytoplasm, providing the force for cell motility. Seems to contact the pointed end of the daughter actin filament. In addition to its role in the cytoplasmic cytoskeleton, the Arp2/3 complex also promotes actin polymerization in the nucleus, thereby regulating gene transcription and repair of damaged DNA. The Arp2/3 complex promotes homologous recombination (HR) repair in response to DNA damage by promoting nuclear actin polymerization, leading to drive motility of double-strand breaks (DSBs). The chain is Actin-related protein 2 (Actr2) from Rattus norvegicus (Rat).